Reading from the N-terminus, the 563-residue chain is MDYLLTSPSSLRFSDFISSIPKETDHKWLRFSVNLGDARRSTRTRITCGAISSRRKLAERESAERENRVLVRSLMSRISDREPLVKTLDKYVKVVRCDHCFLLFEELGKSDKWLQCLEVFRWMQKQRWYIPDNGVYSKLISVMGKKGQTRMAMWLFSEMKNSGCRPDASVYNALITAHLHTRDKAKALEKVRGYLDKMKGIERCQPNVVTYNILLRAFAQSGKVDQVNALFKDLDMSPVSPDVYTFNGVMDAYGKNGMIKEMEAVLTRMRSNECKPDIITFNVLIDSYGKKQEFEKMEQTFKSLMRSKEKPTLPTFNSMIINYGKARMIDKAEWVFKKMNDMNYIPSFITYECMIMMYGYCGSVSRAREIFEEVGESDRVLKASTLNAMLEVYCRNGLYIEADKLFHNASAFRVHPDASTYKFLYKAYTKADMKEQVQILMKKMEKDGIVPNKRFFLEALEVFGSRLPGSGSENRKSTRSSRSRDSPKGRGGNQLTEFQDKDNKHVFRAVQDCRKNYLENLSGHDKGSRDESRKPSQEKQPLFASDQNNMMIKEKKELFTRVL.

The N-terminal 47 residues, 1-47 (MDYLLTSPSSLRFSDFISSIPKETDHKWLRFSVNLGDARRSTRTRIT), are a transit peptide targeting the chloroplast. PPR repeat units follow at residues 132–166 (DNGV…GCRP), 167–197 (DASV…YLDK), 207–241 (NVVT…PVSP), 242–276 (DVYT…ECKP), 277–311 (DIIT…KEKP), 312–346 (TLPT…NYIP), 347–381 (SFIT…DRVL), 382–416 (KAST…RVHP), and 417–451 (DAST…GIVP). Disordered stretches follow at residues 468 to 501 (PGSG…FQDK) and 520 to 551 (NLSG…NNMM). Residues 520-537 (NLSGHDKGSRDESRKPSQ) are compositionally biased toward basic and acidic residues.

This sequence belongs to the PPR family. P subfamily.

The protein localises to the plastid. It is found in the chloroplast. In terms of biological role, essential for embryo development. The polypeptide is Pentatricopeptide repeat-containing protein At4g39620, chloroplastic (Arabidopsis thaliana (Mouse-ear cress)).